A 419-amino-acid polypeptide reads, in one-letter code: L-rhamnose isomerase (419 aa).

Mn(2+) is bound by residues His-262, Asp-294, and Asp-296.

Belongs to the rhamnose isomerase family. In terms of assembly, homotetramer. Mn(2+) serves as cofactor.

It localises to the cytoplasm. The catalysed reaction is L-rhamnopyranose = L-rhamnulose. The protein operates within carbohydrate degradation; L-rhamnose degradation; glycerone phosphate from L-rhamnose: step 1/3. Its function is as follows. Catalyzes the interconversion of L-rhamnose and L-rhamnulose. The polypeptide is L-rhamnose isomerase (Escherichia coli O9:H4 (strain HS)).